The primary structure comprises 58 residues: Small ribosomal subunit protein bS21 (58 aa).

A disordered region spans residues 28–58; it reads VLQDIRKHEHYEKPSIKKKKKSEAARKKKRF. Residues 31-42 show a composition bias toward basic and acidic residues; it reads DIRKHEHYEKPS. Residues 43-58 are compositionally biased toward basic residues; sequence IKKKKKSEAARKKKRF.

This sequence belongs to the bacterial ribosomal protein bS21 family.

This is Small ribosomal subunit protein bS21 from Syntrophomonas wolfei subsp. wolfei (strain DSM 2245B / Goettingen).